The chain runs to 450 residues: Tubulin alpha chain (450 aa).

Q11 is a GTP binding site. Position 40 is an N6-acetyllysine (K40). GTP contacts are provided by E71, S140, G144, T145, T179, N206, and N228. E71 contacts Mg(2+). E254 is an active-site residue.

It belongs to the tubulin family. As to quaternary structure, dimer of alpha and beta chains. A typical microtubule is a hollow water-filled tube with an outer diameter of 25 nm and an inner diameter of 15 nM. Alpha-beta heterodimers associate head-to-tail to form protofilaments running lengthwise along the microtubule wall with the beta-tubulin subunit facing the microtubule plus end conferring a structural polarity. Microtubules usually have 13 protofilaments but different protofilament numbers can be found in some organisms and specialized cells. Requires Mg(2+) as cofactor. Undergoes a tyrosination/detyrosination cycle, the cyclic removal and re-addition of a C-terminal tyrosine residue by the enzymes tubulin tyrosine carboxypeptidase (TTCP) and tubulin tyrosine ligase (TTL), respectively. In terms of processing, acetylation of alpha chains at Lys-40 stabilizes microtubules and affects affinity and processivity of microtubule motors. This modification has a role in multiple cellular functions, ranging from cell motility, cell cycle progression or cell differentiation to intracellular trafficking and signaling.

Its subcellular location is the cytoplasm. The protein resides in the cytoskeleton. The catalysed reaction is GTP + H2O = GDP + phosphate + H(+). In terms of biological role, tubulin is the major constituent of microtubules, a cylinder consisting of laterally associated linear protofilaments composed of alpha- and beta-tubulin heterodimers. Microtubules grow by the addition of GTP-tubulin dimers to the microtubule end, where a stabilizing cap forms. Below the cap, tubulin dimers are in GDP-bound state, owing to GTPase activity of alpha-tubulin. This Lepidoglyphus destructor (Storage mite) protein is Tubulin alpha chain.